A 650-amino-acid chain; its full sequence is Acetyl-coenzyme A synthetase (650 aa).

CoA is bound by residues 190-193 (RGGR), Thr-308, and Asn-332. ATP is bound by residues 384 to 386 (GEP), 408 to 413 (DTWWQT), Asp-497, and Arg-512. Ser-520 lines the CoA pocket. Arg-523 contributes to the ATP binding site. The Mg(2+) site is built by Val-534, His-536, and Val-539. Residue Arg-581 participates in CoA binding. The residue at position 606 (Lys-606) is an N6-acetyllysine.

The protein belongs to the ATP-dependent AMP-binding enzyme family. Mg(2+) is required as a cofactor. Acetylated. Deacetylation by the SIR2-homolog deacetylase activates the enzyme.

The enzyme catalyses acetate + ATP + CoA = acetyl-CoA + AMP + diphosphate. Catalyzes the conversion of acetate into acetyl-CoA (AcCoA), an essential intermediate at the junction of anabolic and catabolic pathways. AcsA undergoes a two-step reaction. In the first half reaction, AcsA combines acetate with ATP to form acetyl-adenylate (AcAMP) intermediate. In the second half reaction, it can then transfer the acetyl group from AcAMP to the sulfhydryl group of CoA, forming the product AcCoA. This is Acetyl-coenzyme A synthetase from Bradyrhizobium sp. (strain ORS 278).